Here is a 236-residue protein sequence, read N- to C-terminus: Small ribosomal subunit protein uS3 (236 aa).

The KH type-2 domain occupies 39 to 107; that stretch reads IREFLTEELK…DTSLNIVEVR (69 aa). A disordered region spans residues 214-236; that stretch reads ASERRAVEGDNQGSSSNRRRENA.

It belongs to the universal ribosomal protein uS3 family. In terms of assembly, part of the 30S ribosomal subunit. Forms a tight complex with proteins S10 and S14.

Functionally, binds the lower part of the 30S subunit head. Binds mRNA in the 70S ribosome, positioning it for translation. The polypeptide is Small ribosomal subunit protein uS3 (Brucella suis (strain ATCC 23445 / NCTC 10510)).